Reading from the N-terminus, the 1349-residue chain is Protein strawberry notch homolog 2 (1349 aa).

3 disordered regions span residues 170-212 (YQSH…QHPD), 609-633 (STRRRRDRGGGKRKRRPRGRGPKAS), and 1319-1349 (PTETPAPLVGVGGGGTERQSVIHFSPPFPNS). The segment covering 177–188 (EEEEGEEEEETE) has biased composition (acidic residues). The segment covering 609-631 (STRRRRDRGGGKRKRRPRGRGPK) has biased composition (basic residues).

The protein belongs to the SBNO family. As to quaternary structure, interacts with TAL1; this interaction inhibits TAL1 occupancy of the DCSTAMP promoter, leading to the activation of the DCSTAMP promoter by the transcription factor MITF. As to expression, expressed in the spleen and bone marrow, and to a lesser extent in the kidney, liver, brain, skin, heart and muscle. Expressed predominantly in osteoclasts, and to a lesser extent in T-cells, B-cells and osteoblasts. Expressed in macrophages.

Its function is as follows. Acts as a transcriptional coregulator, that can have both coactivator and corepressor functions. Inhibits the DCSTAMP-repressive activity of TAL1, hence enhancing the access of the transcription factor MITF to the DC-STAMP promoter in osteoclast. Plays a role in bone homeostasis; required as a positive regulator in TNFSF11//RANKL-mediated osteoclast fusion via a DCSTAMP-dependent pathway. May also be required in the regulation of osteoblast differentiation. Involved in the transcriptional corepression of NF-kappaB in macrophages. Plays a role as a regulator in the pro-inflammatory cascade. The chain is Protein strawberry notch homolog 2 (Sbno2) from Mus musculus (Mouse).